The following is a 419-amino-acid chain: Endothiapepsin (419 aa).

A signal peptide spans 1–20 (MSSPLKNALVTAMLAGGALS). Residues 21 to 89 (SPTKQHVGIP…QNSTSGLAER (69 aa)) constitute a propeptide, activation peptide. The 312-residue stretch at 106-417 (YITPVQIGTP…GATTPTLGFA (312 aa)) folds into the Peptidase A1 domain. Residues Asp-124 and Ser-288 contribute to the active site. A disulfide bond links Cys-344 and Cys-379.

Belongs to the peptidase A1 family.

The enzyme catalyses Hydrolysis of proteins with specificity similar to that of pepsin A, prefers hydrophobic residues at P1 and P1', but does not cleave 14-Ala-|-Leu-15 in the B chain of insulin or Z-Glu-Tyr. Clots milk.. The polypeptide is Endothiapepsin (EAPA) (Cryphonectria parasitica (Chestnut blight fungus)).